The following is a 236-amino-acid chain: Probable metal transport system ATP-binding protein CT_416 (236 aa).

In terms of domain architecture, ABC transporter spans 5-236 (MLLENVSFRY…FCCNTFGRCP (232 aa)). 39–46 (GPNGGGKT) lines the ATP pocket.

Belongs to the ABC transporter superfamily.

The protein resides in the cell inner membrane. Part of an ATP-driven transport system CT_415/CT_416/CT_417 for a metal. Probably responsible for energy coupling to the transport system. In Chlamydia trachomatis serovar D (strain ATCC VR-885 / DSM 19411 / UW-3/Cx), this protein is Probable metal transport system ATP-binding protein CT_416.